Here is a 176-residue protein sequence, read N- to C-terminus: Lipoprotein signal peptidase (176 aa).

A run of 4 helical transmembrane segments spans residues 11–31 (AFVA…LDQL), 38–58 (ATMQ…VLVF), 76–96 (WFFT…MHQH), and 101–121 (LLPA…VDRL). Residues Asp128 and Asp146 contribute to the active site. The helical transmembrane segment at 139–159 (WPAFNLADSAITLGVGLMLWA) threads the bilayer.

This sequence belongs to the peptidase A8 family.

It localises to the cell inner membrane. It catalyses the reaction Release of signal peptides from bacterial membrane prolipoproteins. Hydrolyzes -Xaa-Yaa-Zaa-|-(S,diacylglyceryl)Cys-, in which Xaa is hydrophobic (preferably Leu), and Yaa (Ala or Ser) and Zaa (Gly or Ala) have small, neutral side chains.. It functions in the pathway protein modification; lipoprotein biosynthesis (signal peptide cleavage). This protein specifically catalyzes the removal of signal peptides from prolipoproteins. This chain is Lipoprotein signal peptidase, found in Azoarcus sp. (strain BH72).